The chain runs to 291 residues: MSNERDTSRTPTPDHAEHNAFFPSPYSLSQYTSAKTDFDGADYPTPYKGGKKVLMIGTDERYILMQNGSMFSTGNHPVEMLLPMYHLDKAGFEFDVATLSGNPVKLEMWAMPGEDEAVKSIYAKYLPKLKAPQKLADLLEQAVADDSPYAAVFVPGGHGVLAGIPHSREVKRLLNAFLAKDRYIITLCHGPACLLAPAVEEKPEDYPFKDYEICVFPDALDTGANLEIGYMPGPLPWLVGENLQKLGVKILNKGITGQVHRDRKLLTGDSPLASNNLGKLAAKTLLEAFAR.

A compositionally biased stretch (basic and acidic residues) spans 1 to 18; that stretch reads MSNERDTSRTPTPDHAEH. The interval 1–20 is disordered; sequence MSNERDTSRTPTPDHAEHNA. C188 (nucleophile) is an active-site residue.

This sequence belongs to the peptidase C56 family. HchA subfamily.

It is found in the cytoplasm. It carries out the reaction N(omega)-(1-hydroxy-2-oxopropyl)-L-arginyl-[protein] + H2O = lactate + L-arginyl-[protein] + H(+). The enzyme catalyses N(6)-(1-hydroxy-2-oxopropyl)-L-lysyl-[protein] + H2O = lactate + L-lysyl-[protein] + H(+). It catalyses the reaction S-(1-hydroxy-2-oxopropyl)-L-cysteinyl-[protein] + H2O = lactate + L-cysteinyl-[protein] + H(+). The catalysed reaction is N(omega)-(1-hydroxy-2-oxoethyl)-L-arginyl-[protein] + H2O = L-arginyl-[protein] + glycolate + H(+). It carries out the reaction N(6)-(1-hydroxy-2-oxoethyl)-L-lysyl-[protein] + H2O = glycolate + L-lysyl-[protein] + H(+). The enzyme catalyses S-(1-hydroxy-2-oxoethyl)-L-cysteinyl-[protein] + H2O = glycolate + L-cysteinyl-[protein] + H(+). It catalyses the reaction N(2)-(1-hydroxy-2-oxopropyl)-dGTP + H2O = lactate + dGTP + H(+). The catalysed reaction is N(2)-(1-hydroxy-2-oxopropyl)-GTP + H2O = lactate + GTP + H(+). It carries out the reaction N(2)-(1-hydroxy-2-oxopropyl)-GDP + H2O = lactate + GDP + H(+). The enzyme catalyses N(2)-(1-hydroxy-2-oxopropyl)-GMP + H2O = lactate + GMP + H(+). It catalyses the reaction N(2)-(1-hydroxy-2-oxoethyl)-dGTP + H2O = dGTP + glycolate + H(+). The catalysed reaction is N(2)-(1-hydroxy-2-oxoethyl)-GTP + H2O = glycolate + GTP + H(+). It carries out the reaction N(2)-(1-hydroxy-2-oxoethyl)-GDP + H2O = glycolate + GDP + H(+). The enzyme catalyses N(2)-(1-hydroxy-2-oxoethyl)-GMP + H2O = glycolate + GMP + H(+). It catalyses the reaction an N(2)-(1-hydroxy-2-oxopropyl)-guanosine in RNA + H2O = a guanosine in RNA + lactate + H(+). The catalysed reaction is an N(2)-(1-hydroxy-2-oxopropyl)-2'-deoxyguanosine in DNA + H2O = a 2'-deoxyguanosine in DNA + lactate + H(+). It carries out the reaction an N(2)-(1-hydroxy-2-oxoethyl)-guanosine in RNA + H2O = a guanosine in RNA + glycolate + H(+). The enzyme catalyses an N(2)-(1-hydroxy-2-oxoethyl)-2'-deoxyguanosine in DNA + H2O = a 2'-deoxyguanosine in DNA + glycolate + H(+). In terms of biological role, protein and nucleotide deglycase that catalyzes the deglycation of the Maillard adducts formed between amino groups of proteins or nucleotides and reactive carbonyl groups of glyoxals. Thus, functions as a protein deglycase that repairs methylglyoxal- and glyoxal-glycated proteins, and releases repaired proteins and lactate or glycolate, respectively. Deglycates cysteine, arginine and lysine residues in proteins, and thus reactivates these proteins by reversing glycation by glyoxals. Acts on early glycation intermediates (hemithioacetals and aminocarbinols), preventing the formation of Schiff bases and advanced glycation endproducts (AGE). Also functions as a nucleotide deglycase able to repair glycated guanine in the free nucleotide pool (GTP, GDP, GMP, dGTP) and in DNA and RNA. Is thus involved in a major nucleotide repair system named guanine glycation repair (GG repair), dedicated to reversing methylglyoxal and glyoxal damage via nucleotide sanitization and direct nucleic acid repair. Plays an important role in protecting cells from carbonyl stress. This is Protein/nucleic acid deglycase HchA from Pseudomonas aeruginosa (strain LESB58).